The primary structure comprises 148 residues: Cytochrome c oxidase subunit 6, mitochondrial (148 aa).

Residues 1-40 (MLSRAIFRNPVINRTLLRARPGAYHATRLTKNTFIQSRKY) constitute a mitochondrion transit peptide.

The protein belongs to the cytochrome c oxidase subunit 5A family. Component of the cytochrome c oxidase (complex IV, CIV), a multisubunit enzyme composed of 12 subunits. The complex is composed of a catalytic core of 3 subunits COX1, COX2 and COX3, encoded in the mitochondrial DNA, and 9 supernumerary subunits COX4, COX5A (or COX5B), COX6, COX7, COX8, COX9, COX12, COX13 and COX26, which are encoded in the nuclear genome. The complex exists as a monomer or a dimer and forms supercomplexes (SCs) in the inner mitochondrial membrane with a dimer of ubiquinol-cytochrome c oxidoreductase (cytochrome b-c1 complex, complex III, CIII), resulting in 2 different assemblies (supercomplexes III(2)IV and III(2)IV(2)). COX26 interacts with COX1, COX2, COX6 and COX9.

It is found in the mitochondrion inner membrane. The protein operates within energy metabolism; oxidative phosphorylation. In terms of biological role, component of the cytochrome c oxidase, the last enzyme in the mitochondrial electron transport chain which drives oxidative phosphorylation. The respiratory chain contains 3 multisubunit complexes succinate dehydrogenase (complex II, CII), ubiquinol-cytochrome c oxidoreductase (cytochrome b-c1 complex, complex III, CIII) and cytochrome c oxidase (complex IV, CIV), that cooperate to transfer electrons derived from NADH and succinate to molecular oxygen, creating an electrochemical gradient over the inner membrane that drives transmembrane transport and the ATP synthase. Cytochrome c oxidase is the component of the respiratory chain that catalyzes the reduction of oxygen to water. Electrons originating from reduced cytochrome c in the intermembrane space (IMS) are transferred via the dinuclear copper A center (CU(A)) of COX2 and heme A of COX1 to the active site in COX1, a binuclear center (BNC) formed by heme A3 and copper B (CU(B)). The BNC reduces molecular oxygen to 2 water molecules using 4 electrons from cytochrome c in the IMS and 4 protons from the mitochondrial matrix. COX6 may stabilize the region of CIV at the interface with CIII, supporting a role in formation or stability of the CIII(2)IV(2) SC. The polypeptide is Cytochrome c oxidase subunit 6, mitochondrial (COX6) (Saccharomyces cerevisiae (strain ATCC 204508 / S288c) (Baker's yeast)).